We begin with the raw amino-acid sequence, 105 residues long: Secreted RxLR effector protein 158 (105 aa).

The first 22 residues, 1–22, serve as a signal peptide directing secretion; it reads MRGAHYVAIVLLVAAGGQTAAG. Positions 50–71 match the RxLR-dEER motif; sequence RALQASRNPKDDLMFSAGDEER.

The protein belongs to the RxLR effector family.

The protein localises to the secreted. The protein resides in the host nucleus. Its subcellular location is the host cytoplasm. Functionally, secreted effector that partially suppresses the host cell death induced by cell death-inducing proteins. The chain is Secreted RxLR effector protein 158 from Plasmopara viticola (Downy mildew of grapevine).